The chain runs to 439 residues: Ribosomal protein uS12 methylthiotransferase RimO (439 aa).

Residues 5 to 117 (KKLHLISLGC…IDELIASKQS (113 aa)) form the MTTase N-terminal domain. Residues Cys-14, Cys-48, Cys-80, Cys-149, Cys-153, and Cys-156 each contribute to the [4Fe-4S] cluster site. Positions 135 to 363 (TGSNYHAYIK…GEIAERSTLR (229 aa)) constitute a Radical SAM core domain. Positions 366 to 437 (EKMVGKTVEL…GMQLLATLIK (72 aa)) constitute a TRAM domain.

The protein belongs to the methylthiotransferase family. RimO subfamily. [4Fe-4S] cluster is required as a cofactor.

The protein localises to the cytoplasm. The catalysed reaction is L-aspartate(89)-[ribosomal protein uS12]-hydrogen + (sulfur carrier)-SH + AH2 + 2 S-adenosyl-L-methionine = 3-methylsulfanyl-L-aspartate(89)-[ribosomal protein uS12]-hydrogen + (sulfur carrier)-H + 5'-deoxyadenosine + L-methionine + A + S-adenosyl-L-homocysteine + 2 H(+). Functionally, catalyzes the methylthiolation of an aspartic acid residue of ribosomal protein uS12. This chain is Ribosomal protein uS12 methylthiotransferase RimO, found in Sulfurovum sp. (strain NBC37-1).